A 262-amino-acid polypeptide reads, in one-letter code: Small ribosomal subunit protein eS1 (262 aa).

Residues 1-18 (MAVGKNKRISKGKKGSKK) are compositionally biased toward basic residues. Positions 1 to 20 (MAVGKNKRISKGKKGSKKKT) are disordered.

The protein belongs to the eukaryotic ribosomal protein eS1 family. Component of the small ribosomal subunit. Mature ribosomes consist of a small (40S) and a large (60S) subunit. The 40S subunit contains about 33 different proteins and 1 molecule of RNA (18S). The 60S subunit contains about 49 different proteins and 3 molecules of RNA (25S, 5.8S and 5S).

Its subcellular location is the cytoplasm. The chain is Small ribosomal subunit protein eS1 from Oryza sativa subsp. japonica (Rice).